The primary structure comprises 244 residues: Type III pantothenate kinase (244 aa).

Residue Asp-7–Lys-14 participates in ATP binding. Substrate contacts are provided by residues Tyr-95 and Gly-102–Arg-105. Asp-104 serves as the catalytic Proton acceptor. Residue Thr-126 coordinates ATP. Substrate is bound at residue Thr-177.

The protein belongs to the type III pantothenate kinase family. As to quaternary structure, homodimer. NH4(+) is required as a cofactor. Requires K(+) as cofactor.

It is found in the cytoplasm. It carries out the reaction (R)-pantothenate + ATP = (R)-4'-phosphopantothenate + ADP + H(+). It functions in the pathway cofactor biosynthesis; coenzyme A biosynthesis; CoA from (R)-pantothenate: step 1/5. In terms of biological role, catalyzes the phosphorylation of pantothenate (Pan), the first step in CoA biosynthesis. This Acinetobacter baumannii (strain AB307-0294) protein is Type III pantothenate kinase.